We begin with the raw amino-acid sequence, 908 residues long: 26S proteasome non-ATPase regulatory subunit 2 (908 aa).

N-acetylmethionine is present on M1. Residues 1-51 (MEEGGRDKTPVQSQQPSATAPSGADEKSSGKERRDAGEKDKEQELSEEDKQ) form a disordered region. T9 is subject to Phosphothreonine. Residues 10 to 20 (PVQSQQPSATA) are compositionally biased toward polar residues. Positions 24 to 51 (ADEKSSGKERRDAGEKDKEQELSEEDKQ) are enriched in basic and acidic residues. Phosphoserine occurs at positions 29 and 147. Y194 is subject to Phosphotyrosine. Phosphoserine occurs at positions 361 and 363. PC repeat units lie at residues 409–442 (SAAA…YIKS), 443–479 (GALL…TMRL), 480–514 (GSIF…SMEV), 517–551 (VTAL…TELK), and 560–589 (LGLG…PFRS). N6-acetyllysine is present on K551. A compositionally biased stretch (basic and acidic residues) spans 623-643 (KEKEEDKDKKEKKDKDKKEAP). The segment at 623–645 (KEKEEDKDKKEKKDKDKKEAPAD) is disordered. PC repeat units lie at residues 692 to 723 (LALA…EVSY) and 742 to 757 (AAML…KDPN). The required for interaction with UBLCP1 stretch occupies residues 708 to 903 (DTLSKFSHDA…LEGFVILRKN (196 aa)).

This sequence belongs to the proteasome subunit S2 family. As to quaternary structure, component of the 19S proteasome regulatory particle complex. The 26S proteasome consists of a 20S core particle (CP) and two 19S regulatory subunits (RP). The regulatory particle is made of a lid composed of 9 subunits, a base containing 6 ATPases and few additional components including PSMD2. Interacts with RPGRIP1L. Interacts with CRY1 in a KDM8-dependent manner. Interacts (via C-terminus) with phosphatase UBLCP1 (via ubiquitin-like domain); the interaction recruits UBLCP1 to the 19S regulatory particle where it dephosphorylates 19S subunit PSMC2/RPT1 which impairs PSMC2 ATPase activity and disrupts 26S proteasome assembly.

In terms of biological role, component of the 26S proteasome, a multiprotein complex involved in the ATP-dependent degradation of ubiquitinated proteins. This complex plays a key role in the maintenance of protein homeostasis by removing misfolded or damaged proteins, which could impair cellular functions, and by removing proteins whose functions are no longer required. Therefore, the proteasome participates in numerous cellular processes, including cell cycle progression, apoptosis, or DNA damage repair. Its function is as follows. Binds to the intracellular domain of tumor necrosis factor type 1 receptor. The binding domain of TRAP1 and TRAP2 resides outside the death domain of TNFR1. The sequence is that of 26S proteasome non-ATPase regulatory subunit 2 (Psmd2) from Rattus norvegicus (Rat).